Here is a 131-residue protein sequence, read N- to C-terminus: Small ribosomal subunit protein uS8 (131 aa).

This sequence belongs to the universal ribosomal protein uS8 family. Part of the 30S ribosomal subunit. Contacts proteins S5 and S12.

One of the primary rRNA binding proteins, it binds directly to 16S rRNA central domain where it helps coordinate assembly of the platform of the 30S subunit. The chain is Small ribosomal subunit protein uS8 from Shewanella amazonensis (strain ATCC BAA-1098 / SB2B).